A 486-amino-acid polypeptide reads, in one-letter code: Probable cytosol aminopeptidase (486 aa).

Residues lysine 256 and aspartate 261 each contribute to the Mn(2+) site. Lysine 268 is an active-site residue. Positions 280, 339, and 341 each coordinate Mn(2+). Arginine 343 is a catalytic residue.

The protein belongs to the peptidase M17 family. Requires Mn(2+) as cofactor.

The protein resides in the cytoplasm. The enzyme catalyses Release of an N-terminal amino acid, Xaa-|-Yaa-, in which Xaa is preferably Leu, but may be other amino acids including Pro although not Arg or Lys, and Yaa may be Pro. Amino acid amides and methyl esters are also readily hydrolyzed, but rates on arylamides are exceedingly low.. It catalyses the reaction Release of an N-terminal amino acid, preferentially leucine, but not glutamic or aspartic acids.. In terms of biological role, presumably involved in the processing and regular turnover of intracellular proteins. Catalyzes the removal of unsubstituted N-terminal amino acids from various peptides. In Synechococcus sp. (strain ATCC 27144 / PCC 6301 / SAUG 1402/1) (Anacystis nidulans), this protein is Probable cytosol aminopeptidase.